A 148-amino-acid polypeptide reads, in one-letter code: 3-hydroxyacyl-[acyl-carrier-protein] dehydratase FabZ (148 aa).

Residue histidine 50 is part of the active site.

The protein belongs to the thioester dehydratase family. FabZ subfamily.

The protein localises to the cytoplasm. It catalyses the reaction a (3R)-hydroxyacyl-[ACP] = a (2E)-enoyl-[ACP] + H2O. Involved in unsaturated fatty acids biosynthesis. Catalyzes the dehydration of short chain beta-hydroxyacyl-ACPs and long chain saturated and unsaturated beta-hydroxyacyl-ACPs. This is 3-hydroxyacyl-[acyl-carrier-protein] dehydratase FabZ from Lactobacillus helveticus (strain DPC 4571).